The chain runs to 463 residues: Putative F-box protein At3g29830 (463 aa).

Residues 7–55 form the F-box domain; the sequence is RDRISSLPDVVLVMILSFLSFKDNVKTSILSKRWRNICYEAKNISFKES.

The chain is Putative F-box protein At3g29830 from Arabidopsis thaliana (Mouse-ear cress).